The primary structure comprises 357 residues: Protein-glutamate methylesterase/protein-glutamine glutaminase 1 (357 aa).

Residues 10–127 form the Response regulatory domain; that stretch reads RTLIVDDSAF…DVNKIEKELV (118 aa). 4-aspartylphosphate is present on D61. The CheB-type methylesterase domain occupies 159–353; it reads SCAGDFAVLI…EEIVRMSEVK (195 aa). Active-site residues include S171, H198, and D295.

The protein belongs to the CheB family. In terms of processing, phosphorylated by CheA. Phosphorylation of the N-terminal regulatory domain activates the methylesterase activity.

Its subcellular location is the cytoplasm. It carries out the reaction [protein]-L-glutamate 5-O-methyl ester + H2O = L-glutamyl-[protein] + methanol + H(+). The enzyme catalyses L-glutaminyl-[protein] + H2O = L-glutamyl-[protein] + NH4(+). Involved in chemotaxis. Part of a chemotaxis signal transduction system that modulates chemotaxis in response to various stimuli. Catalyzes the demethylation of specific methylglutamate residues introduced into the chemoreceptors (methyl-accepting chemotaxis proteins or MCP) by CheR. Also mediates the irreversible deamidation of specific glutamine residues to glutamic acid. The chain is Protein-glutamate methylesterase/protein-glutamine glutaminase 1 from Methanosarcina mazei (strain ATCC BAA-159 / DSM 3647 / Goe1 / Go1 / JCM 11833 / OCM 88) (Methanosarcina frisia).